Reading from the N-terminus, the 385-residue chain is MAALSGVRWLTRALVSAGNPGAWRGLSTSAAAHAASRSQAEDVRVEGSFPVTMLPGDGVGPELMHAVKEVFKAAAVPVEFQEHHLSEVQNMASEEKLEQVLSSMKENKVAIIGKIHTPMEYKGELASYDMRLRRKLDLFANVVHVKSLPGYMTRHNNLDLVIIREQTEGEYSSLEHESARGVIECLKIVTRAKSQRIAKFAFDYATKKGRSKVTAVHKANIMKLGDGLFLQCCEEVAELYPKIKFETMIIDNCCMQLVQNPYQFDVLVMPNLYGNIIDNLAAGLVGGAGVVPGESYSAEYAVFETGARHPFAQAVGRNIANPTAMLLSASNMLRHLNLEYHSNMIADAVKKVIKVGKVRTRDMGGYSTTTDFIKSVIGHLHPHGS.

Residues 1 to 34 (MAALSGVRWLTRALVSAGNPGAWRGLSTSAAAHA) constitute a mitochondrion transit peptide. Lys-199 is modified (N6-acetyllysine).

Belongs to the isocitrate and isopropylmalate dehydrogenases family. Heterooligomer of subunits alpha (IDH3A), beta (IDH3B), and gamma (IDH3G) in the apparent ratio of 2:1:1. The heterodimer containing one IDH3A and one IDH3B subunit and the heterodimer containing one IDH3A and one IDH3G subunit assemble into a heterotetramer (which contains two subunits of IDH3A, one of IDH3B and one of IDH3G) and further into the heterooctamer.

The protein localises to the mitochondrion. The heterotetramer and the heterodimer composed of IDH3A and IDH3G subunits can be allosterically activated by citrate (CIT) or/and ADP, and the two activators can act independently or synergistically. The heterodimer composed of IDH3A and IDH3B subunits cannot be allosterically regulated and the allosteric regulation of the heterotetramer is through the IDH3G subunit and not the IDH3B subunit. The IDH3G subunit contains the allosteric site which consists of a CIT-binding site and an ADP-binding site, and the binding of CIT and ADP causes conformational changes at the allosteric site which are transmitted to the active site in the catalytic subunit (IDH3A) through a cascade of conformational changes at the heterodimer interface, leading to stabilization of the isocitrate-binding at the active site and thus activation of the enzyme. ATP can activate the heterotetramer and the heterodimer composed of IDH3A and IDH3G subunits at low concentrations but inhibits their activities at high concentrations, whereas ATP exhibits only inhibitory effect on the heterodimer composed of IDH3A and IDH3B subunits. Its function is as follows. Plays a structural role to facilitate the assembly and ensure the full activity of the enzyme catalyzing the decarboxylation of isocitrate (ICT) into alpha-ketoglutarate. The heterodimer composed of the alpha (IDH3A) and beta (IDH3B) subunits and the heterodimer composed of the alpha (IDH3A) and gamma (IDH3G) subunits, have considerable basal activity but the full activity of the heterotetramer (containing two subunits of IDH3A, one of IDH3B and one of IDH3G) requires the assembly and cooperative function of both heterodimers. The chain is Isocitrate dehydrogenase [NAD] subunit beta, mitochondrial (IDH3B) from Macaca fascicularis (Crab-eating macaque).